We begin with the raw amino-acid sequence, 420 residues long: UDP-N-acetylglucosamine 1-carboxyvinyltransferase (420 aa).

22 to 23 (KN) lines the phosphoenolpyruvate pocket. A UDP-N-acetyl-alpha-D-glucosamine-binding site is contributed by arginine 93. The active-site Proton donor is the cysteine 117. Cysteine 117 carries the post-translational modification 2-(S-cysteinyl)pyruvic acid O-phosphothioketal. UDP-N-acetyl-alpha-D-glucosamine-binding residues include aspartate 307 and isoleucine 329.

This sequence belongs to the EPSP synthase family. MurA subfamily.

The protein resides in the cytoplasm. The catalysed reaction is phosphoenolpyruvate + UDP-N-acetyl-alpha-D-glucosamine = UDP-N-acetyl-3-O-(1-carboxyvinyl)-alpha-D-glucosamine + phosphate. Its pathway is cell wall biogenesis; peptidoglycan biosynthesis. Cell wall formation. Adds enolpyruvyl to UDP-N-acetylglucosamine. This Alteromonas mediterranea (strain DSM 17117 / CIP 110805 / LMG 28347 / Deep ecotype) protein is UDP-N-acetylglucosamine 1-carboxyvinyltransferase.